A 458-amino-acid chain; its full sequence is uncharacterized protein (458 aa).

2 disordered regions span residues 339-397 (GTGY…ARIL) and 434-458 (YNSE…EDDC). Acidic residues-rich tracts occupy residues 344 to 390 (SDSD…EEEP) and 436 to 458 (SEDE…EDDC).

This is an uncharacterized protein from Invertebrate iridescent virus 3 (IIV-3).